The primary structure comprises 874 residues: Endothelial PAS domain-containing protein 1 (874 aa).

Positions 1–23 (MTADKEKKRSSSELRKEKSRDAA) are disordered. In terms of domain architecture, bHLH spans 14–67 (LRKEKSRDAARCRRSKETEVFYELAHELPLPHSVSSHLDKASIMRLAISFLRTH). Residues 26–53 (RRSKETEVFYELAHELPLPHSVSSHLDK) form a DNA-binding region. Positions 84–154 (DQQMDNLYLK…ENLTLKNGSG (71 aa)) constitute a PAS 1 domain. The interval 171 to 192 (RMKCTVTNRGRTVNLKSATWKV) is required for heterodimer formation with ARNT. The PAS 2 domain maps to 230–300 (QHPSHMDIPL…KSHQNLCTKG (71 aa)). Residues 304-347 (SGQYRMLAKHGGYVWLETQGTVIYNPRNLQPQCIMCVNYVLSEI) enclose the PAC domain. Pro405 carries the 4-hydroxyproline modification. Residues 438–489 (WVSGLRSHSAQSESGSLPAFTVPQADTPGNTTPSASSSSSCSTPSSPEDYYS) are disordered. Polar residues predominate over residues 443–452 (RSHSAQSESG). The segment covering 464 to 484 (TPGNTTPSASSSSSCSTPSSP) has biased composition (low complexity). The NTAD stretch occupies residues 495–541 (LKIEVIEKLFAMDTEPRDPGSTQTDFSELDLETLAPYIPMDGEDFQL). Pro530 is subject to 4-hydroxyproline. Residues 777-803 (LGQPLRHLPPPQPPSTRSSGENAKTGF) form a disordered region. The segment at 834 to 874 (SFEPYLLPELTRYDCEVNVPVPGSSTLLQGRDLLRALDQAT) is CTAD. Thr844 carries the phosphothreonine modification. Residue Asn851 is modified to (3S)-3-hydroxyasparagine.

Interacts with HIF3A isoform 2. Efficient DNA binding requires dimerization with another bHLH protein. Heterodimerizes with ARNT; heterodimer binds to core DNA sequence 5'-TACGTG-3' within the hypoxia response element (HRE) of target gene promoters. Interacts with CREBBP. Interacts with EGLN1. Interacts with VHL. In normoxia, is probably hydroxylated on Pro-405 and Pro-530 by EGLN1/PHD1, EGLN2/PHD2 and/or EGLN3/PHD3. The hydroxylated prolines promote interaction with VHL, initiating rapid ubiquitination and subsequent proteasomal degradation. Under hypoxia, proline hydroxylation is impaired and ubiquitination is attenuated, resulting in stabilization. Post-translationally, in normoxia, is hydroxylated on Asn-851 by HIF1AN thus probably abrogating interaction with CREBBP and EP300 and preventing transcriptional activation. In terms of processing, phosphorylated on multiple sites in the CTAD. The iron and 2-oxoglutarate dependent 3-hydroxylation of asparagine is (S) stereospecific within HIF CTAD domains. As to expression, expressed in most tissues, with highest levels in lung, followed by heart, kidney, brain and liver. Predominantly expressed in endothelial cells. Also found in smooth muscle cells of the uterus, neurons, and brown adipose tissue. High expression in embryonic choroid plexus and kidney glomeruli.

The protein localises to the nucleus. It is found in the nucleus speckle. Transcription factor involved in the induction of oxygen regulated genes. Heterodimerizes with ARNT; heterodimer binds to core DNA sequence 5'-TACGTG-3' within the hypoxia response element (HRE) of target gene promoters. Regulates the vascular endothelial growth factor (VEGF) expression and seems to be implicated in the development of blood vessels and the tubular system of lung. May also play a role in the formation of the endothelium that gives rise to the blood brain barrier. Potent activator of the Tie-2 tyrosine kinase expression. Activation requires recruitment of transcriptional coactivators such as CREBBP and probably EP300. Interaction with redox regulatory protein APEX seems to activate CTAD. The sequence is that of Endothelial PAS domain-containing protein 1 (Epas1) from Mus musculus (Mouse).